The sequence spans 340 residues: Leucine-rich repeat-containing protein 23 (340 aa).

Over residues 1 to 27 (MSDEDDVDDVDAEQDEVESDKEIEEWE) the composition is skewed to acidic residues. The tract at residues 1–38 (MSDEDDVDDVDAEQDEVESDKEIEEWEDYRKETEEASE) is disordered. LRR repeat units follow at residues 89-110 (HLRY…NSLT), 111-134 (HLLW…PYLQ), 177-197 (SLHT…IYLP), 198-219 (KLKN…ENLS), 220-241 (NLTT…SQEM), and 243-264 (SLQY…AKLR). The interaction with RSPH9 stretch occupies residues 205-340 (AQNLLKKVEG…QDMEPYLPPV (136 aa)). The 39-residue stretch at 277–315 (NPCADETDYRQEALVQMAHLERLDKEFYEDDDRAEAEEI) folds into the LRRCT domain. Residues 305–328 (EDDDRAEAEEIRQRLKEEQDQDLD) are a coiled coil. The tract at residues 317 to 340 (QRLKEEQDQDLDPDQDMEPYLPPV) is disordered. Residues 323 to 333 (QDQDLDPDQDM) are compositionally biased toward acidic residues.

As to quaternary structure, component of the axonemal radial spoke complex. Interacts with RSPH3A and RSPH3B. Interacts with RSPH9. As to expression, expressed in the testis (at protein level).

It localises to the cytoplasm. It is found in the cytoskeleton. The protein localises to the flagellum axoneme. Essential for sperm motility and male fertility. Plays an important role in the proper assembly of the third radial spoke (RS3) head and the bridge structure between RS2 and RS3 in the sperm flagella. This chain is Leucine-rich repeat-containing protein 23 (Lrrc23), found in Mus musculus (Mouse).